Consider the following 339-residue polypeptide: UDP-N-acetylenolpyruvoylglucosamine reductase (339 aa).

Residues 18–189 enclose the FAD-binding PCMH-type domain; that stretch reads GIDVRARLLA…LRVRLRLTRR (172 aa). R166 is a catalytic residue. Residue S239 is the Proton donor of the active site. The active site involves E335.

The protein belongs to the MurB family. FAD is required as a cofactor.

The protein localises to the cytoplasm. The enzyme catalyses UDP-N-acetyl-alpha-D-muramate + NADP(+) = UDP-N-acetyl-3-O-(1-carboxyvinyl)-alpha-D-glucosamine + NADPH + H(+). Its pathway is cell wall biogenesis; peptidoglycan biosynthesis. Its function is as follows. Cell wall formation. This chain is UDP-N-acetylenolpyruvoylglucosamine reductase, found in Pseudomonas aeruginosa (strain ATCC 15692 / DSM 22644 / CIP 104116 / JCM 14847 / LMG 12228 / 1C / PRS 101 / PAO1).